The sequence spans 149 residues: Deoxyuridine 5'-triphosphate nucleotidohydrolase (149 aa).

Residues 68 to 70 (RSG), Asn81, 85 to 87 (LID), and Met95 contribute to the substrate site.

It belongs to the dUTPase family. Mg(2+) is required as a cofactor.

It carries out the reaction dUTP + H2O = dUMP + diphosphate + H(+). It participates in pyrimidine metabolism; dUMP biosynthesis; dUMP from dCTP (dUTP route): step 2/2. This enzyme is involved in nucleotide metabolism: it produces dUMP, the immediate precursor of thymidine nucleotides and it decreases the intracellular concentration of dUTP so that uracil cannot be incorporated into DNA. The sequence is that of Deoxyuridine 5'-triphosphate nucleotidohydrolase from Polynucleobacter asymbioticus (strain DSM 18221 / CIP 109841 / QLW-P1DMWA-1) (Polynucleobacter necessarius subsp. asymbioticus).